The primary structure comprises 468 residues: UDP-N-acetylmuramoyl-L-alanine--L-glutamate ligase (468 aa).

122-128 (GTKGKST) lines the ATP pocket.

Belongs to the MurCDEF family. MurD2 subfamily.

It is found in the cytoplasm. It catalyses the reaction UDP-N-acetyl-alpha-D-muramoyl-L-alanine + L-glutamate + ATP = UDP-N-acetyl-alpha-D-muramoyl-L-alanyl-L-glutamate + ADP + phosphate + H(+). The protein operates within cell wall biogenesis; peptidoglycan biosynthesis. In terms of biological role, cell wall formation. Catalyzes the addition of L-glutamate to the nucleotide precursor UDP-N-acetylmuramoyl-L-alanine. Has weak activity with D-glutamate. The sequence is that of UDP-N-acetylmuramoyl-L-alanine--L-glutamate ligase from Xanthomonas oryzae pv. oryzae (strain MAFF 311018).